The following is a 320-amino-acid chain: Ribosomal RNA large subunit methyltransferase F (320 aa).

A disordered region spans residues 1–20 (MHKSANSKTRKQSKGLHPRN).

This sequence belongs to the methyltransferase superfamily. METTL16/RlmF family.

The protein resides in the cytoplasm. It catalyses the reaction adenosine(1618) in 23S rRNA + S-adenosyl-L-methionine = N(6)-methyladenosine(1618) in 23S rRNA + S-adenosyl-L-homocysteine + H(+). Its function is as follows. Specifically methylates the adenine in position 1618 of 23S rRNA. The polypeptide is Ribosomal RNA large subunit methyltransferase F (Saccharophagus degradans (strain 2-40 / ATCC 43961 / DSM 17024)).